A 365-amino-acid chain; its full sequence is 3-isopropylmalate dehydrogenase (365 aa).

Position 80-91 (80-91 (GPKWGTGSVRPE)) interacts with NAD(+). Residues arginine 98, arginine 108, arginine 137, and aspartate 226 each contribute to the substrate site. Mg(2+) is bound by residues aspartate 226, aspartate 251, and aspartate 255. 290–301 (GSAPDLPKGKVN) is a binding site for NAD(+).

Belongs to the isocitrate and isopropylmalate dehydrogenases family. In terms of assembly, homodimer. Mg(2+) serves as cofactor. The cofactor is Mn(2+).

The protein resides in the cytoplasm. The enzyme catalyses (2R,3S)-3-isopropylmalate + NAD(+) = 4-methyl-2-oxopentanoate + CO2 + NADH. Its pathway is amino-acid biosynthesis; L-leucine biosynthesis; L-leucine from 3-methyl-2-oxobutanoate: step 3/4. In terms of biological role, catalyzes the oxidation of 3-carboxy-2-hydroxy-4-methylpentanoate (3-isopropylmalate) to 3-carboxy-4-methyl-2-oxopentanoate. The product decarboxylates to 4-methyl-2 oxopentanoate. The protein is 3-isopropylmalate dehydrogenase (LEU2) of Maudiozyma exigua (Yeast).